The chain runs to 676 residues: UvrABC system protein B (676 aa).

The Helicase ATP-binding domain occupies 39 to 424 (RGILDGIPSQ…RGHIIEQIIR (386 aa)). 52–59 (GTTGSGKT) is an ATP binding site. The Beta-hairpin motif lies at 105–128 (YYDYYQPEAYIARSDTYIEKSLLI). Positions 441 to 604 (QIDDLLEEIR…ITPKPIIKPI (164 aa)) constitute a Helicase C-terminal domain. The tract at residues 611 to 631 (KEGAQEDSRPETQSTEDLESS) is disordered. The 36-residue stretch at 629 to 664 (ESSIKQYEEAMYKAAQDFQFDEAAKYRDLMNAAKRQ) folds into the UVR domain.

It belongs to the UvrB family. As to quaternary structure, forms a heterotetramer with UvrA during the search for lesions. Interacts with UvrC in an incision complex.

It localises to the cytoplasm. The UvrABC repair system catalyzes the recognition and processing of DNA lesions. A damage recognition complex composed of 2 UvrA and 2 UvrB subunits scans DNA for abnormalities. Upon binding of the UvrA(2)B(2) complex to a putative damaged site, the DNA wraps around one UvrB monomer. DNA wrap is dependent on ATP binding by UvrB and probably causes local melting of the DNA helix, facilitating insertion of UvrB beta-hairpin between the DNA strands. Then UvrB probes one DNA strand for the presence of a lesion. If a lesion is found the UvrA subunits dissociate and the UvrB-DNA preincision complex is formed. This complex is subsequently bound by UvrC and the second UvrB is released. If no lesion is found, the DNA wraps around the other UvrB subunit that will check the other stand for damage. This chain is UvrABC system protein B, found in Chlamydia muridarum (strain MoPn / Nigg).